A 373-amino-acid chain; its full sequence is 3 beta-hydroxysteroid dehydrogenase/Delta 5--&gt;4-isomerase type 1 (373 aa).

Residues 10–15 (GAGGFL), Tyr155, and Lys159 contribute to the NADP(+) site. Lys159 (proton donor) is an active-site residue. Residues 288–308 (LSLMYWIGFLLEIVSFLLRPI) traverse the membrane as a helical segment.

The protein belongs to the 3-beta-HSD family. As to expression, placenta and skin. Predominantly expressed in mammary gland tissue.

The protein localises to the endoplasmic reticulum membrane. It is found in the mitochondrion membrane. The enzyme catalyses a 3beta-hydroxy-Delta(5)-steroid + NAD(+) = a 3-oxo-Delta(5)-steroid + NADH + H(+). It carries out the reaction pregnenolone + NAD(+) = pregn-5-ene-3,20-dione + NADH + H(+). It catalyses the reaction 3beta-hydroxyandrost-5-en-17-one + NAD(+) = androst-5-ene-3,17-dione + NADH + H(+). The catalysed reaction is androst-5-en-3beta,17beta-diol + NAD(+) = 17beta-hydroxy-androst-5-en-3-one + NADH + H(+). The enzyme catalyses a 3beta-hydroxysteroid + NADP(+) = a 3-oxosteroid + NADPH + H(+). It carries out the reaction 5alpha-androstane-3beta,17beta-diol + NADP(+) = 17beta-hydroxy-5alpha-androstan-3-one + NADPH + H(+). It catalyses the reaction 3beta-hydroxy-5alpha-androstan-17-one + NADP(+) = 5alpha-androstan-3,17-dione + NADPH + H(+). The catalysed reaction is a 3-oxo-Delta(5)-steroid = a 3-oxo-Delta(4)-steroid. The enzyme catalyses pregn-5-ene-3,20-dione = progesterone. It carries out the reaction androst-5-ene-3,17-dione = androst-4-ene-3,17-dione. It catalyses the reaction 17beta-hydroxy-androst-5-en-3-one = testosterone. The catalysed reaction is 5alpha-androstane-3beta,17beta-diol + NAD(+) = 17beta-hydroxy-5alpha-androstan-3-one + NADH + H(+). Its pathway is steroid hormone biosynthesis. The protein operates within steroid metabolism. A bifunctional enzyme responsible for the oxidation and isomerization of 3beta-hydroxy-Delta(5)-steroid precursors to 3-oxo-Delta(4)-steroids, an essential step in steroid hormone biosynthesis. Specifically catalyzes the conversion of pregnenolone to progesterone, 17alpha-hydroxypregnenolone to 17alpha-hydroxyprogesterone, dehydroepiandrosterone (DHEA) to 4-androstenedione, and androstenediol to testosterone. Additionally, catalyzes the interconversion between 3beta-hydroxy and 3-oxo-5alpha-androstane steroids controlling the bioavalability of the active forms. Specifically converts dihydrotestosterone to its inactive form 5alpha-androstanediol, that does not bind androgen receptor/AR. Also converts androstanedione, a precursor of testosterone and estrone, to epiandrosterone. Expected to use NAD(+) as preferred electron donor for the 3beta-hydroxy-steroid dehydrogenase activity and NADPH for the 3-ketosteroid reductase activity. In Homo sapiens (Human), this protein is 3 beta-hydroxysteroid dehydrogenase/Delta 5--&gt;4-isomerase type 1.